Reading from the N-terminus, the 483-residue chain is Acetyltransferase AOL_s00215g273 (483 aa).

Helical transmembrane passes span 9-29 (ALIG…TSFV), 33-53 (IYPL…TEGL), 141-161 (VAYI…LYTC), 191-211 (IFQM…SVLV), 292-312 (FLVF…VYYG), 334-354 (VTGY…FICW), 372-392 (WFVG…VLWI), and 453-473 (LGGY…GSGF).

Belongs to the wax synthase family.

It is found in the membrane. It functions in the pathway secondary metabolite biosynthesis; terpenoid biosynthesis. Its function is as follows. Acetyltransferase; part of the gene cluster that mediates the biosynthesis of sesquiterpenyl epoxy-cyclohexenoids (SECs) such as anthrobotrisins and arthrosporols, metabolites that possess a novel hybrid carbon skeleton consisting of a polyketide-derived epoxycyclohexenol combined with a terpenoid-derived monocyclic sesquiterpenol substructure (PKS-PTS hybrid). The SEC pathway plays an important role for fungal soil colonization via decreasing fungal nematode-capturing ability. The role of the acetyltransferase in SEC biosynthesis has still to be determined. The pathway begins with the biosynthesis of 6-methylsalicylic acid (6-MSA), the first precursor of the polyketide-derived epoxycyclohexenol in arthrosporols, by the polyketide synthase (PKS) AOL_s00215g283 via condensation of 1 acetate and 3 malonate units. The 6-methylsalicylic acid decarboxylase AOL_s00215g281 then catalyzes the decarboxylation of 6-methylsalicylic acid to yield m-cresol. The cytochrome P450 monooxygenase AOL_s00215g282 further oxidizes m-cresol to yield toluquinol. With the assistance of the oxidoreductase AOL_s00215g277, the polyprenyl transferase AOL_s00215g276 catalyzes the farnesylation of toluquinol to produce farnesyl hydroquinone, the hybrid precursor for biosynthesis of SECs. Farnesyl hydroquinone undergoes epoxidation and then subsequent dehydrogenation to form farnesyl epoxy-quinone, the first and simplest SEC. The cytochrome P450 monooxygenase AOL_s00215g278 and the FAD-dependent monooxygenase AOL_s00215g279 might be involved in the oxygenation of the phenol moiety, most likely in the epoxy formation. The cytochrome P450 monooxygenases AOL_s00215g274 and AOL_s00215g280 are involved in specific regional ketone reductions at respectively C-4 and C-1 of farnesyl epoxy-quinone PubMed:33823587. The protein is Acetyltransferase AOL_s00215g273 of Arthrobotrys oligospora (strain ATCC 24927 / CBS 115.81 / DSM 1491) (Nematode-trapping fungus).